Here is a 213-residue protein sequence, read N- to C-terminus: Orotate phosphoribosyltransferase (213 aa).

K26 serves as a coordination point for 5-phospho-alpha-D-ribose 1-diphosphate. Residue 34-35 (FF) coordinates orotate. 5-phospho-alpha-D-ribose 1-diphosphate is bound by residues 72 to 73 (YK), R99, K100, K103, H105, and 124 to 132 (DDVITAGTA). Positions 128 and 156 each coordinate orotate.

This sequence belongs to the purine/pyrimidine phosphoribosyltransferase family. PyrE subfamily. As to quaternary structure, homodimer. Mg(2+) serves as cofactor.

It catalyses the reaction orotidine 5'-phosphate + diphosphate = orotate + 5-phospho-alpha-D-ribose 1-diphosphate. The protein operates within pyrimidine metabolism; UMP biosynthesis via de novo pathway; UMP from orotate: step 1/2. Catalyzes the transfer of a ribosyl phosphate group from 5-phosphoribose 1-diphosphate to orotate, leading to the formation of orotidine monophosphate (OMP). The protein is Orotate phosphoribosyltransferase of Photorhabdus laumondii subsp. laumondii (strain DSM 15139 / CIP 105565 / TT01) (Photorhabdus luminescens subsp. laumondii).